Reading from the N-terminus, the 1770-residue chain is AF4/FMR2 family member lilli (1770 aa).

Low complexity-rich tracts occupy residues 1–19 (MAQQQQQQQQQQHLQHPHQ), 154–204 (LGHS…YLKQ), and 227–269 (PSSS…GTTP). Disordered regions lie at residues 1–28 (MAQQQQQQQQQQHLQHPHQNTNSNNQLQ), 134–327 (SRHA…EKDI), 402–660 (TSLL…PGNV), 761–805 (LHSA…LQLP), 822–1173 (MQKA…KQGQ), and 1291–1390 (KHEH…QISK). Polar residues predominate over residues 402–414 (TSLLTTPPHASQG). Positions 434–447 (KAAAALSPTAAAKP) are enriched in low complexity. Residues 448 to 461 (LKTEKNHTLEKQDS) are compositionally biased toward basic and acidic residues. The span at 463 to 474 (LENDLELSESED) shows a compositional bias: acidic residues. A phosphoserine mark is found at Ser470 and Ser472. Low complexity predominate over residues 483–503 (SAGNSSNSSESDSSESGSESS). Basic residues predominate over residues 511 to 520 (QHHHHNHHHQ). Low complexity predominate over residues 521-552 (QQQQQLQQQQQQQLLQQKQQHQQILQQQQRQL). Positions 582-614 (FGSGGAGNGGCSTASSGGGGGGSGSGGGSGSSS) are enriched in gly residues. The segment covering 615–625 (GIGTMSSGSSS) has biased composition (low complexity). 2 stretches are compositionally biased toward polar residues: residues 626–638 (NKTPSPTESNKWT) and 647–659 (ANQTSSESVSPGN). The segment covering 768–800 (SDSGTSGSGSTSSSSSSSDSAPGEVVPMPGPGE) has biased composition (low complexity). Positions 844 to 854 (QRQKKPRKKKP) are enriched in basic residues. 2 positions are modified to phosphoserine: Ser863 and Ser864. 5 stretches are compositionally biased toward low complexity: residues 880–893 (AAAAAAAQAQATAT), 909–928 (QQQSGGSGNLSSASAGSSSQ), 994–1028 (ANASAVAAASSSSDEDSSSSTGSTGSKSSSSSSSS), 1071–1081 (SGSSSPSSSSS), and 1111–1131 (SQHSQQLSSSECSSSSGSSTS). Positions 900–912 (KKGRGRPRKQQQS) form a DNA-binding region, a.T hook. A phosphoserine mark is found at Ser920 and Ser922. 2 stretches are compositionally biased toward basic and acidic residues: residues 1295 to 1312 (PHPVKPEPELDAGYESKF) and 1321 to 1355 (FQLKQERDRERERERDRDRERERERERDREREREQ). A Phosphoserine modification is found at Ser1442. 2 stretches are compositionally biased toward low complexity: residues 1483-1499 (AAATATAATSTTGTSTA) and 1656-1676 (GNTPSSISPSNSVGSQGSGSN). 2 disordered regions span residues 1483 to 1502 (AAATATAATSTTGTSTAPPA) and 1656 to 1683 (GNTPSSISPSNSVGSQGSGSNTPPGKIV).

The protein belongs to the AF4 family.

The protein resides in the nucleus. In terms of biological role, has a role in transcriptional regulation. Acts in parallel with the Ras/MAPK and the PI3K/PKB pathways in the control of cell identity and cellular growth. Essential for regulation of the cytoskeleton and cell growth but not for cell proliferation or growth rate. Required specifically for the microtubule-based basal transport of lipid droplets. Plays a partially redundant function downstream of Raf in cell fate specification in the developing eye. Pair-rule protein that regulates embryonic cellularization, gastrulation and segmentation. This is AF4/FMR2 family member lilli from Drosophila pseudoobscura pseudoobscura (Fruit fly).